Here is a 166-residue protein sequence, read N- to C-terminus: Large ribosomal subunit protein uL10 (166 aa).

This sequence belongs to the universal ribosomal protein uL10 family. In terms of assembly, part of the ribosomal stalk of the 50S ribosomal subunit. The N-terminus interacts with L11 and the large rRNA to form the base of the stalk. The C-terminus forms an elongated spine to which L12 dimers bind in a sequential fashion forming a multimeric L10(L12)X complex.

Forms part of the ribosomal stalk, playing a central role in the interaction of the ribosome with GTP-bound translation factors. The chain is Large ribosomal subunit protein uL10 from Bacillus cereus (strain ATCC 14579 / DSM 31 / CCUG 7414 / JCM 2152 / NBRC 15305 / NCIMB 9373 / NCTC 2599 / NRRL B-3711).